The sequence spans 318 residues: Deoxyribose-phosphate aldolase (318 aa).

The Proton donor/acceptor role is filled by Asp-155. Lys-218 functions as the Schiff-base intermediate with acetaldehyde in the catalytic mechanism. Residue Lys-254 is the Proton donor/acceptor of the active site.

It belongs to the DeoC/FbaB aldolase family. DeoC type 2 subfamily. As to quaternary structure, interacts with YBX1.

The protein resides in the cytoplasm. Its subcellular location is the cytoplasmic granule. It is found in the nucleus. It catalyses the reaction 2-deoxy-D-ribose 5-phosphate = D-glyceraldehyde 3-phosphate + acetaldehyde. The protein operates within carbohydrate degradation; 2-deoxy-D-ribose 1-phosphate degradation; D-glyceraldehyde 3-phosphate and acetaldehyde from 2-deoxy-alpha-D-ribose 1-phosphate: step 2/2. Functionally, catalyzes a reversible aldol reaction between acetaldehyde and D-glyceraldehyde 3-phosphate to generate 2-deoxy-D-ribose 5-phosphate. Participates in stress granule (SG) assembly. May allow ATP production from extracellular deoxyinosine in conditions of energy deprivation. The chain is Deoxyribose-phosphate aldolase (Dera) from Mus musculus (Mouse).